A 450-amino-acid polypeptide reads, in one-letter code: Molybdate-anion transporter (450 aa).

The next 12 helical transmembrane spans lie at 1-21, 43-63, 79-99, 128-148, 176-196, 198-218, 249-269, 278-298, 311-331, 344-364, 376-396, and 409-429; these read MLVT…GLEL, LDFY…APYL, ILYV…SSLV, FVLL…FSAF, FWNH…ACWM, LGPV…GALA, VLLL…FVFL, GAPL…GSSL, PMHL…MLTF, FIAF…MSFL, GVLN…LLVL, and FSIC…LFTV.

Belongs to the major facilitator superfamily.

The protein resides in the cell membrane. In terms of biological role, mediates high-affinity intracellular uptake of the rare oligo-element molybdenum. This is Molybdate-anion transporter (MFSD5) from Bos taurus (Bovine).